The chain runs to 132 residues: Large ribosomal subunit protein uL14 (132 aa).

This sequence belongs to the universal ribosomal protein uL14 family. As to quaternary structure, part of the 50S ribosomal subunit. Forms a cluster with proteins L3 and L24e, part of which may contact the 16S rRNA in 2 intersubunit bridges.

In terms of biological role, binds to 23S rRNA. Forms part of two intersubunit bridges in the 70S ribosome. The protein is Large ribosomal subunit protein uL14 of Methanothrix thermoacetophila (strain DSM 6194 / JCM 14653 / NBRC 101360 / PT) (Methanosaeta thermophila).